Consider the following 745-residue polypeptide: Probable endochitinase ARB_07371 (745 aa).

The signal sequence occupies residues 1 to 23 (MALPKTIMAFIAFISFLVSTTFA). Residues 30-351 (TNVVTYWGQG…SNIKRLLLNN (322 aa)) form the GH18 domain. Residue E178 is the Proton donor of the active site. 2 disordered regions span residues 351 to 372 (NDPS…SMST) and 395 to 446 (WSMP…TTEI). Low complexity predominate over residues 357-372 (TTTSKTMSSTKTSMST). Residues N438 and N484 are each glycosylated (N-linked (GlcNAc...) asparagine). Positions 651 to 715 (SEPMTPTQVP…EMGGNGGDRT (65 aa)) are disordered. The GPI-anchor amidated glycine moiety is linked to residue G720. The propeptide at 721–745 (GAGVVSPSFSVVVIVLGSIVYHIMQ) is removed in mature form.

The protein belongs to the glycosyl hydrolase 18 family. Chitinase class III subfamily.

The protein resides in the cell membrane. It is found in the secreted. The protein localises to the cell wall. It catalyses the reaction Random endo-hydrolysis of N-acetyl-beta-D-glucosaminide (1-&gt;4)-beta-linkages in chitin and chitodextrins.. Its function is as follows. GPI-anchored chitinase involved in the degradation of chitin, a component of the cell walls of fungi and exoskeletal elements of some animals (including worms and arthropods). Required to reshape the cell wall at the sites where cell wall remodeling and/or cell wall maturation actively take place such as sites of conidia formation. The chain is Probable endochitinase ARB_07371 from Arthroderma benhamiae (strain ATCC MYA-4681 / CBS 112371) (Trichophyton mentagrophytes).